Reading from the N-terminus, the 37-residue chain is Large ribosomal subunit protein bL36 (37 aa).

This sequence belongs to the bacterial ribosomal protein bL36 family.

In Shewanella frigidimarina (strain NCIMB 400), this protein is Large ribosomal subunit protein bL36.